We begin with the raw amino-acid sequence, 459 residues long: uncharacterized protein (459 aa).

The interval 28-47 (AHDEELTGPPQKPAYAAKPA) is disordered. One can recognise an FAD-binding PCMH-type domain in the interval 35 to 214 (GPPQKPAYAA…TEVIVKLHPR (180 aa)).

It belongs to the oxygen-dependent FAD-linked oxidoreductase family. It depends on FAD as a cofactor.

This is an uncharacterized protein from Mycobacterium tuberculosis (strain CDC 1551 / Oshkosh).